The sequence spans 147 residues: Angiogenin (147 aa).

A signal peptide spans 1–24; that stretch reads MVMGLGVLLLVFVLGLGLTPPTLA. Position 25 is a pyrrolidone carboxylic acid (glutamine 25). Histidine 37 serves as the catalytic Proton acceptor. TRNA is bound by residues arginine 45 and aspartate 46. 3 disulfide bridges follow: cysteine 50/cysteine 105, cysteine 63/cysteine 116, and cysteine 81/cysteine 131. The short motif at 55-59 is the Nucleolar localization signal element; it reads RRRGL. TRNA is bound by residues cysteine 105 and valine 127. The active-site Proton donor is the histidine 138.

It belongs to the pancreatic ribonuclease family. Homodimer. Interacts with RNH1; inhibiting ANG ribonuclease activity. Interacts with PCNA.

It localises to the secreted. It is found in the nucleus. The protein resides in the nucleolus. Its subcellular location is the cytoplasm. The protein localises to the stress granule. With respect to regulation, has weak tRNA ribonuclease activity by itself due to partial autoinhibition by its C-terminus, which folds into a short alpha-helix that partially occludes the substrate-binding site. In absence of stress, the ribonuclease activity is inhibited by RNH1 in the cytoplasm. In response to stress, dissociates from RNH1 in the cytoplasm and associates with cytoplasmic ribosomes with vacant A-sites: ribosomes directly activate the tRNA ribonuclease activity of ANG by refolding the C-terminal alpha-helix. In response to stress, the angiogenic activity of ANG is inhibited by RNH1 in the nucleus. Secreted ribonuclease that can either promote or restrict cell proliferation of target cells, depending on the context. Endocytosed in target cells via its receptor PLXNB2 and translocates to the cytoplasm or nucleus. Under stress conditions, localizes to the cytoplasm and promotes the assembly of stress granules (SGs): specifically cleaves a subset of tRNAs within anticodon loops to produce tRNA-derived stress-induced fragments (tiRNAs), resulting in translation repression and inhibition of cell proliferation. tiRNas also prevent formation of apoptosome, thereby promoting cell survival. Preferentially cleaves RNAs between a pyrimidine and an adenosine residue, suggesting that it cleaves the anticodon loop of tRNA(Ala) (32-UUAGCAU-38) after positions 33 and 36. Cleaves a subset of tRNAs, including tRNA(Ala), tRNA(Glu), tRNA(Gly), tRNA(Lys), tRNA(Val), tRNA(His), tRNA(Asp) and tRNA(Sec). Under growth conditions and in differentiated cells, translocates to the nucleus and stimulates ribosomal RNA (rRNA) transcription, including that containing the initiation site sequences of 45S rRNA, thereby promoting cell growth and proliferation. Angiogenin induces vascularization of normal and malignant tissues via its ability to promote rRNA transcription. Involved in hematopoietic stem and progenitor cell (HSPC) growth and survival by promoting rRNA transcription in growth conditions and inhibiting translation in response to stress, respectively. Mediates the crosstalk between myeloid and intestinal epithelial cells to protect the intestinal epithelial barrier integrity: secreted by myeloid cells and promotes intestinal epithelial cells proliferation and survival. Also mediates osteoclast-endothelial cell crosstalk in growing bone: produced by osteoclasts and protects the neighboring vascular cells against senescence by promoting rRNA transcription. This chain is Angiogenin (ANG), found in Gorilla gorilla gorilla (Western lowland gorilla).